The sequence spans 500 residues: Pyridine nucleotide-disulfide oxidoreductase domain-containing protein 1 (500 aa).

Methionine 1 is modified (N-acetylmethionine).

This sequence belongs to the class-I pyridine nucleotide-disulfide oxidoreductase family. PYROXD1 subfamily. Requires FAD as cofactor.

Its subcellular location is the nucleus. It localises to the cytoplasm. The protein resides in the myofibril. It is found in the sarcomere. Its function is as follows. Probable FAD-dependent oxidoreductase; involved in the cellular oxidative stress response. Required for normal sarcomere structure and muscle fiber integrity. This Pongo abelii (Sumatran orangutan) protein is Pyridine nucleotide-disulfide oxidoreductase domain-containing protein 1 (PYROXD1).